A 210-amino-acid chain; its full sequence is Probable GTP-binding protein EngB (210 aa).

The EngB-type G domain maps to 25-199 (TGIEVAFAGR…RQKLDSWFNE (175 aa)). Residues 33-40 (GRSNAGKS), 60-64 (GRTQL), 78-81 (DLPG), 145-148 (TKAD), and 178-180 (FSS) each bind GTP. Mg(2+)-binding residues include serine 40 and threonine 62.

Belongs to the TRAFAC class TrmE-Era-EngA-EngB-Septin-like GTPase superfamily. EngB GTPase family. The cofactor is Mg(2+).

Its function is as follows. Necessary for normal cell division and for the maintenance of normal septation. This is Probable GTP-binding protein EngB from Klebsiella pneumoniae (strain 342).